Reading from the N-terminus, the 435-residue chain is BAHD acyltransferase BIA1 (435 aa).

Active-site proton acceptor residues include His151 and Asp369.

The protein belongs to the plant acyltransferase family. In terms of tissue distribution, mostly expressed in roots (particularly in the root elongation zone), and, to a lower extent, in seedling, leaves (especially in hydathodes), siliques (e.g. in developing seeds) and flowers.

The protein localises to the cytoplasm. Monitors brassinosteroids (BR) responses and homeostasis, particularly in the root and hypocotyl in darkness. Promotes flavonoid biosynthesis. The protein is BAHD acyltransferase BIA1 of Arabidopsis thaliana (Mouse-ear cress).